Reading from the N-terminus, the 437-residue chain is Lipid II isoglutaminyl synthase (glutamine-hydrolyzing) subunit MurT (437 aa).

Residues C202, C205, C224, and C226 each contribute to the Zn(2+) site. D349 is an active-site residue.

The protein belongs to the MurCDEF family. MurT subfamily. In terms of assembly, forms a heterodimer with GatD.

The enzyme catalyses beta-D-GlcNAc-(1-&gt;4)-Mur2Ac(oyl-L-Ala-gamma-D-Glu-L-Lys-D-Ala-D-Ala)-di-trans,octa-cis-undecaprenyl diphosphate + L-glutamine + ATP + H2O = beta-D-GlcNAc-(1-&gt;4)-Mur2Ac(oyl-L-Ala-D-isoglutaminyl-L-Lys-D-Ala-D-Ala)-di-trans,octa-cis-undecaprenyl diphosphate + L-glutamate + ADP + phosphate + H(+). It carries out the reaction beta-D-GlcNAc-(1-&gt;4)-Mur2Ac(oyl-L-Ala-gamma-D-Glu-L-Lys-D-Ala-D-Ala)-di-trans,octa-cis-undecaprenyl diphosphate + ATP = beta-D-GlcNAc-(1-&gt;4)-Mur2Ac(oyl-L-Ala-gamma-D-O-P-Glu-L-Lys-D-Ala-D-Ala)-di-trans,octa-cis-undecaprenyl diphosphate + ADP. The catalysed reaction is beta-D-GlcNAc-(1-&gt;4)-Mur2Ac(oyl-L-Ala-gamma-D-O-P-Glu-L-Lys-D-Ala-D-Ala)-di-trans,octa-cis-undecaprenyl diphosphate + NH4(+) = beta-D-GlcNAc-(1-&gt;4)-Mur2Ac(oyl-L-Ala-D-isoglutaminyl-L-Lys-D-Ala-D-Ala)-di-trans,octa-cis-undecaprenyl diphosphate + phosphate + H(+). It participates in cell wall biogenesis; peptidoglycan biosynthesis. Functionally, the lipid II isoglutaminyl synthase complex catalyzes the formation of alpha-D-isoglutamine in the cell wall lipid II stem peptide. The MurT subunit catalyzes the ATP-dependent amidation of D-glutamate residue of lipid II, converting it to an isoglutamine residue. The sequence is that of Lipid II isoglutaminyl synthase (glutamine-hydrolyzing) subunit MurT from Staphylococcus aureus (strain COL).